We begin with the raw amino-acid sequence, 361 residues long: Chorismate synthase (361 aa).

Residues Arg48 and Arg54 each contribute to the NADP(+) site. FMN contacts are provided by residues 131–133, 243–244, Gly287, 302–306, and Arg328; these read RSS, NA, and KPTSS.

This sequence belongs to the chorismate synthase family. As to quaternary structure, homotetramer. Requires FMNH2 as cofactor.

It carries out the reaction 5-O-(1-carboxyvinyl)-3-phosphoshikimate = chorismate + phosphate. The protein operates within metabolic intermediate biosynthesis; chorismate biosynthesis; chorismate from D-erythrose 4-phosphate and phosphoenolpyruvate: step 7/7. Its function is as follows. Catalyzes the anti-1,4-elimination of the C-3 phosphate and the C-6 proR hydrogen from 5-enolpyruvylshikimate-3-phosphate (EPSP) to yield chorismate, which is the branch point compound that serves as the starting substrate for the three terminal pathways of aromatic amino acid biosynthesis. This reaction introduces a second double bond into the aromatic ring system. This is Chorismate synthase from Rhodopseudomonas palustris (strain HaA2).